The chain runs to 326 residues: UDP-3-O-acylglucosamine N-acyltransferase (326 aa).

His-225 functions as the Proton acceptor in the catalytic mechanism.

The protein belongs to the transferase hexapeptide repeat family. LpxD subfamily. As to quaternary structure, homotrimer.

The catalysed reaction is a UDP-3-O-[(3R)-3-hydroxyacyl]-alpha-D-glucosamine + a (3R)-hydroxyacyl-[ACP] = a UDP-2-N,3-O-bis[(3R)-3-hydroxyacyl]-alpha-D-glucosamine + holo-[ACP] + H(+). Its pathway is bacterial outer membrane biogenesis; LPS lipid A biosynthesis. Functionally, catalyzes the N-acylation of UDP-3-O-acylglucosamine using 3-hydroxyacyl-ACP as the acyl donor. Is involved in the biosynthesis of lipid A, a phosphorylated glycolipid that anchors the lipopolysaccharide to the outer membrane of the cell. The polypeptide is UDP-3-O-acylglucosamine N-acyltransferase (Verminephrobacter eiseniae (strain EF01-2)).